The following is a 208-amino-acid chain: Meiotically up-regulated gene 9 protein (208 aa).

The interval 77–114 is disordered; the sequence is VPASNEKAARVSNLKTVPSLKRENKEVNANSKPPVKQQ.

Functionally, has a role in meiosis. This chain is Meiotically up-regulated gene 9 protein (mug9), found in Schizosaccharomyces pombe (strain 972 / ATCC 24843) (Fission yeast).